Consider the following 499-residue polypeptide: uncharacterized protein (499 aa).

This is an uncharacterized protein from Methanothermobacter thermautotrophicus (Methanobacterium thermoformicicum).